We begin with the raw amino-acid sequence, 285 residues long: Golgi to ER traffic protein 2 (285 aa).

Basic and acidic residues predominate over residues 1 to 10 (MSELTEAEKR). Residues 1–71 (MSELTEAEKR…HSATPDIKED (71 aa)) are disordered. Position 2 is an N-acetylserine (Ser-2). Topologically, residues 2–148 (SELTEAEKRR…LDYHDYLLNR (147 aa)) are cytoplasmic. Residues 11–20 (RLLRERRQKK) show a composition bias toward basic residues. The segment covering 24 to 42 (GGASSRLNKITGQASSHLN) has biased composition (polar residues). Ser-45 carries the phosphoserine modification. Low complexity predominate over residues 49–60 (APSAAKATPPAS). A helical membrane pass occupies residues 149-169 (LKAWTILVKWVFFLLPYLYLI). Residues 170 to 196 (TRPNSSVWPAYAFTQSAWFAPLRNPSN) are Lumenal-facing. Asn-173 and Asn-196 each carry an N-linked (GlcNAc...) asparagine glycan. A helical transmembrane segment spans residues 197-216 (FTRIFATFEFLSISIYYQLL). Residues 217–263 (KNVEHKSKIKNLQDTNKLVKLVSLVPEGVIPVANLKGKLITLLQYWD) are Cytoplasmic-facing. The chain crosses the membrane as a helical span at residues 264–284 (LLSMLITDISFVLIVLGLLTY). Position 285 (Leu-285) is a topological domain, lumenal.

It belongs to the GET2 family. In terms of assembly, component of the Golgi to ER traffic (GET) complex, which is composed of GET1, GET2 and GET3. Within the complex, GET1 and GET2 form a heterotetramer which is stabilized by phosphatidylinositol binding and which binds to the GET3 homodimer.

The protein resides in the endoplasmic reticulum membrane. It is found in the golgi apparatus membrane. Its function is as follows. Required for the post-translational delivery of tail-anchored (TA) proteins to the endoplasmic reticulum. Together with GET1, acts as a membrane receptor for soluble GET3, which recognizes and selectively binds the transmembrane domain of TA proteins in the cytosol. The GET complex cooperates with the HDEL receptor ERD2 to mediate the ATP-dependent retrieval of resident ER proteins that contain a C-terminal H-D-E-L retention signal from the Golgi to the ER. Involved in DNA replication and DNA damage response and also in cell wall function. This Saccharomyces cerevisiae (strain YJM789) (Baker's yeast) protein is Golgi to ER traffic protein 2.